Reading from the N-terminus, the 179-residue chain is Signal peptidase complex catalytic subunit SEC11A (179 aa).

Over 1 to 16 (MLSLDFLDDVRRMNKR) the chain is Cytoplasmic. A helical; Signal-anchor for type II membrane protein membrane pass occupies residues 17–36 (QLYYQVLNFGMIVSSALMIW). Topologically, residues 37 to 179 (KGLMVITGSE…LGLFVLVHRE (143 aa)) are lumenal. Active-site charge relay system residues include Ser-56, His-96, and Asp-122. A C-terminal short (CTS) helix region spans residues 165–176 (AVLFLLGLFVLV).

Belongs to the peptidase S26B family. Component of the signal peptidase complex paralog A (SPC-A) composed of a catalytic subunit SEC11A and three accessory subunits SPCS1, SPCS2 and SPCS3. Within the complex, interacts with SPCS2 and SPCS3. The complex induces a local thinning of the ER membrane which is used to measure the length of the signal peptide (SP) h-region of protein substrates. This ensures the selectivity of the complex towards h-regions shorter than 18-20 amino acids.

Its subcellular location is the endoplasmic reticulum membrane. The catalysed reaction is Cleavage of hydrophobic, N-terminal signal or leader sequences from secreted and periplasmic proteins.. In terms of biological role, catalytic component of the signal peptidase complex (SPC) which catalyzes the cleavage of N-terminal signal sequences from nascent proteins as they are translocated into the lumen of the endoplasmic reticulum. Specifically cleaves N-terminal signal peptides that contain a hydrophobic alpha-helix (h-region) shorter than 18-20 amino acids. This chain is Signal peptidase complex catalytic subunit SEC11A (SEC11A), found in Bos taurus (Bovine).